We begin with the raw amino-acid sequence, 1765 residues long: Sodium channel protein type 11 subunit alpha (1765 aa).

Topologically, residues 1–126 (MEERYYPVIF…PLRSLMIRIS (126 aa)) are cytoplasmic. An I repeat occupies 115–403 (FNPLRSLMIR…VTMAYEEQNR (289 aa)). The chain crosses the membrane as a helical span at residues 127–148 (VHSVFSMFIICTVIINCMFMAN). The Extracellular segment spans residues 149 to 157 (SMERSFDND). Residues 158 to 177 (IPEYVFIGIYILEAVIKILA) form a helical membrane-spanning segment. Residues 178 to 189 (RGFIVDEFSFLR) are Cytoplasmic-facing. The helical transmembrane segment at 190-209 (DPWNWLDFIVIGTAIATCFP) threads the bilayer. Residues 210-216 (GSQVNLS) are Extracellular-facing. A glycan (N-linked (GlcNAc...) asparagine) is linked at Asn-214. The helical; Voltage-sensor transmembrane segment at 217–236 (ALRTFRVFRALKAISVISGL) threads the bilayer. Residues 237 to 252 (KVIVGALLRSVKKLVD) lie on the Cytoplasmic side of the membrane. The helical transmembrane segment at 253 to 266 (VMVLTLFCLSIFAL) threads the bilayer. The Extracellular portion of the chain corresponds to 267-339 (VGQQLFMGIL…PDNNYTKFDN (73 aa)). Cysteines 280 and 317 form a disulfide. Asn-319 and Asn-333 each carry an N-linked (GlcNAc...) asparagine glycan. Positions 340–364 (FGWSFLAMFRVMTQDSWERLYRQIL) form an intramembrane region, pore-forming. At 365 to 371 (RTSGIYF) the chain is on the extracellular side. The helical transmembrane segment at 372–397 (VFFFVVVIFLGSFYLLNLTLAVVTMA) threads the bilayer. Over 398 to 567 (YEEQNRNVAA…WLCIKKVLRT (170 aa)) the chain is Cytoplasmic. Residues 554–820 (CSPQWLCIKK…EGETRKTKVQ (267 aa)) form an II repeat. A helical transmembrane segment spans residues 568–591 (IMTDPFTELAITICIIINTVFLAV). Residues 592–602 (EHHNMDDNLKT) lie on the Extracellular side of the membrane. The helical transmembrane segment at 603–626 (ILKIGNWVFTGIFIAEMCLKIIAL) threads the bilayer. Residues 627-634 (DPYHYFRH) are Cytoplasmic-facing. A helical transmembrane segment spans residues 635-656 (GWNVFDSIVALLSLADVLYNTL). Residues 657 to 662 (SDNNRS) lie on the Extracellular side of the membrane. A glycan (N-linked (GlcNAc...) asparagine) is linked at Asn-660. A helical; Voltage-sensor membrane pass occupies residues 663 to 682 (FLASLRVLRVFKLAKSWPTL). The Cytoplasmic portion of the chain corresponds to 683–697 (NTLIKIIGHSVGALG). The helical transmembrane segment at 698–720 (NLTVVLTIVVFIFSVVGMRLFGT) threads the bilayer. Over 721–741 (KFNKTAYATQERPRRRWHMDN) the chain is Extracellular. Asn-723 carries an N-linked (GlcNAc...) asparagine glycan. Positions 742 to 762 (FYHSFLVVFRILCGEWIENMW) form an intramembrane region, pore-forming. The Extracellular segment spans residues 763–772 (GCMQDMDGSP). The cysteines at positions 764 and 774 are disulfide-linked. A helical membrane pass occupies residues 773-798 (LCIIVFVLIMVIGKLVVLNLFIALLL). Over 799 to 1029 (NSFSNEEKDG…WWNIRKTCYQ (231 aa)) the chain is Cytoplasmic. The stretch at 1022 to 1319 (NIRKTCYQIV…KKYYNAMKKL (298 aa)) is one III repeat. The chain crosses the membrane as a helical span at residues 1030-1052 (IVKHSWFESFIIFVILLSSGALI). Residues 1053–1066 (FEDVNLPSRPQVEK) lie on the Extracellular side of the membrane. The helical transmembrane segment at 1067-1092 (LLRCTDNIFTFIFLLEMILKWVAFGF) threads the bilayer. Residues 1093–1098 (RRYFTS) lie on the Cytoplasmic side of the membrane. Residues 1099 to 1116 (AWCWLDFLIVVVSVLSLM) traverse the membrane as a helical segment. Residue Asn-1117 is a topological domain, extracellular. Residues 1118–1139 (LPSLKSFRTLRALRPLRALSQF) form a helical; Voltage-sensor membrane-spanning segment. Over 1140–1158 (EGMKVVVYALISAIPAILN) the chain is Cytoplasmic. A helical membrane pass occupies residues 1159-1180 (VLLVCLIFWLVFCILGVNLFSG). Residues 1181-1223 (KFGRCINGTDINMYLDFTEVPNRSQCNISNYSWKVPQVNFDNV) lie on the Extracellular side of the membrane. N-linked (GlcNAc...) asparagine glycosylation is found at Asn-1187, Asn-1202, Asn-1207, and Asn-1210. The segment at residues 1224–1245 (GNAYLALLQVATYKGWLEIMNA) is an intramembrane region (pore-forming). The Extracellular segment spans residues 1246–1261 (AVDSREKDEQPDFEAN). A helical transmembrane segment spans residues 1262–1288 (LYAYLYFVVFIIFGSFFTLNLFIGVII). Residues 1289-1341 (DNFNQQQKKLGGQDIFMTEEQKKYYNAMKKLGTKKPQKPIPRPLNKCQAFVFD) lie on the Cytoplasmic side of the membrane. The stretch at 1328 to 1619 (IPRPLNKCQA…WEKFDPEASQ (292 aa)) is one IV repeat. A helical transmembrane segment spans residues 1342–1365 (LVTSQVFDVIILGLIVLNMIIMMA). The Extracellular segment spans residues 1366 to 1376 (ESADQPKDVKK). Residues 1377 to 1400 (TFDILNIAFVVIFTIECLIKVFAL) traverse the membrane as a helical segment. The Cytoplasmic portion of the chain corresponds to 1401–1406 (RQHYFT). The chain crosses the membrane as a helical span at residues 1407-1430 (NGWNLFDCVVVVLSIISTLVSRLE). Topologically, residues 1431 to 1440 (DSDISFPPTL) are extracellular. A helical; Voltage-sensor transmembrane segment spans residues 1441–1463 (FRVVRLARIGRILRLVRAARGIR). Residues 1464–1478 (TLLFALMMSLPSLFN) lie on the Cytoplasmic side of the membrane. The chain crosses the membrane as a helical span at residues 1479–1501 (IGLLLFLVMFIYAIFGMSWFSKV). Topologically, residues 1502–1515 (KKGSGIDDIFNFET) are extracellular. Positions 1516–1538 (FTGSMLCLFQITTSAGWDTLLNP) form an intramembrane region, pore-forming. At 1539-1559 (MLEAKEHCNSSSQDSCQQPQI) the chain is on the extracellular side. Asn-1547 is a glycosylation site (N-linked (GlcNAc...) asparagine). A helical transmembrane segment spans residues 1560–1584 (AVVYFVSYIIISFLIVVNMYIAVIL). At 1585–1765 (ENFNTATEES…DVAKVKVHND (181 aa)) the chain is on the cytoplasmic side.

It belongs to the sodium channel (TC 1.A.1.10) family. Nav1.9/SCN11A subfamily. The voltage-resistant sodium channel consists of an ion conducting pore forming alpha-subunit regulated by one or more auxiliary subunits SCN1B, SCN2B and SCN3B. In terms of tissue distribution, expressed (at protein level) in myenteric sensory neurons. Expressed in small sensory neurons of the dorsal root ganglia (C-fiber neurons) and trigeminal ganglia.

Its subcellular location is the cell membrane. The enzyme catalyses Na(+)(in) = Na(+)(out). Its activity is regulated as follows. Activity is not sensitive to inhibition by tetrodotoxin. Functionally, sodium channel mediating the voltage-dependent sodium ion permeability of excitable membranes. Assuming opened or closed conformations in response to the voltage difference across the membrane, the protein forms a sodium-selective channel through which sodium ions may pass in accordance with their electrochemical gradient. Involved in membrane depolarization during action potential in nociceptors which function as key relay stations for the electrical transmission of pain signals from the periphery to the central nervous system. Also involved in rapid BDNF-evoked neuronal depolarization. The protein is Sodium channel protein type 11 subunit alpha of Rattus norvegicus (Rat).